The chain runs to 617 residues: Electron transfer flavoprotein-ubiquinone oxidoreductase, mitochondrial (617 aa).

Residues 1 to 33 (MLVPLAKLSCLAYQCFHALKIKKNYLPLCATRW) constitute a mitochondrion transit peptide. An FAD-binding site is contributed by 71 to 85 (VVIVGAGPAGLSAAV). An N6-acetyllysine modification is found at Lys96. An intramembrane segment occupies 109-130 (IGAHTLSGACLDPGAFKELFPD). N6-acetyllysine is present on residues Lys132 and Lys223. Residues Gly305 and Gly306 each coordinate a ubiquinone. The residue at position 357 (Lys357) is an N6-acetyllysine. Residues 428-447 (IGLHVTEYEDNLKNSWVWKE) lie within the membrane without spanning it. Ser551 carries the phosphoserine modification. Residues Cys561, Cys586, Cys589, and Cys592 each contribute to the [4Fe-4S] cluster site. Residues 577 to 606 (FRLQINAQNCVHCKTCDIKDPSQNINWVVP) form the 4Fe-4S ferredoxin-type domain.

Belongs to the ETF-QO/FixC family. As to quaternary structure, monomer. The cofactor is [4Fe-4S] cluster. FAD serves as cofactor.

It is found in the mitochondrion inner membrane. It carries out the reaction a ubiquinone + reduced [electron-transfer flavoprotein] = a ubiquinol + oxidized [electron-transfer flavoprotein] + H(+). Functionally, accepts electrons from ETF and reduces ubiquinone. This Homo sapiens (Human) protein is Electron transfer flavoprotein-ubiquinone oxidoreductase, mitochondrial.